Here is a 304-residue protein sequence, read N- to C-terminus: ATP phosphoribosyltransferase (304 aa).

The protein belongs to the ATP phosphoribosyltransferase family. Long subfamily. The cofactor is Mg(2+).

It localises to the cytoplasm. It catalyses the reaction 1-(5-phospho-beta-D-ribosyl)-ATP + diphosphate = 5-phospho-alpha-D-ribose 1-diphosphate + ATP. The protein operates within amino-acid biosynthesis; L-histidine biosynthesis; L-histidine from 5-phospho-alpha-D-ribose 1-diphosphate: step 1/9. With respect to regulation, feedback inhibited by histidine. Its function is as follows. Catalyzes the condensation of ATP and 5-phosphoribose 1-diphosphate to form N'-(5'-phosphoribosyl)-ATP (PR-ATP). Has a crucial role in the pathway because the rate of histidine biosynthesis seems to be controlled primarily by regulation of HisG enzymatic activity. This is ATP phosphoribosyltransferase from Xanthomonas campestris pv. campestris (strain B100).